The primary structure comprises 519 residues: Trichothecene 15-O-acetyltransferase TRI3 (519 aa).

His414 serves as a coordination point for 15-deacetylcalonectrin.

It belongs to the trichothecene O-acetyltransferase family.

The protein operates within sesquiterpene biosynthesis; trichothecene biosynthesis. In terms of biological role, 15-O-acetyltransferase; part of the core gene cluster that mediates the biosynthesis of trichothecenes, a very large family of chemically related bicyclic sesquiterpene compounds acting as mycotoxins, including T2-toxin. The biosynthesis of trichothecenes begins with the cyclization of farnesyl diphosphate to trichodiene and is catalyzed by the trichodiene synthase TRI5. Trichodiene undergoes a series of oxygenations catalyzed by the cytochrome P450 monooxygenase TRI4. TRI4 controls the addition of four oxygens at C-2, C-3, C-11, and the C-12, C-13-epoxide to form the intermediate isotrichotriol. Isotrichotriol then undergoes a non-enzymatic isomerization and cyclization to form isotrichodermol. During this process, the oxygen at the C-2 position becomes the pyran ring oxygen and the hydroxyl group at C-11 is lost. More complex type A trichothecenes are built by modifying isotrichodermol through a series of paired hydroxylation and acetylation or acylation steps. Isotrichodermol is converted to isotrichodermin by the acetyltransferase TRI101. TRI101 encodes a C-3 transacetylase that acts as a self-protection or resistance factor during biosynthesis and that the presence of a free C-3 hydroxyl group is a key component of Fusarium trichothecene phytotoxicity. A second hydroxyl group is added to C-15 by the trichothecene C-15 hydroxylase TRI11, producing 15-decalonectrin, which is then acetylated by TRI3, producing calonectrin. A third hydroxyl group is added at C-4 by the cytochrome P450 monooxygenase TRI13, converting calonectrin to 3,15-diacetoxyspirpenol, which is subsequently acetylated by the acetyltransferase TRI7. A fourth hydroxyl group is added to C-8 by the cytochrome P450 monooxygenase TRI1, followed by the addition of an isovaleryl moiety by TRI16. Finally, the acetyl group is removed from the C-3 position by the trichothecene C-3 esterase TRI8 to produce T-2 toxin. This chain is Trichothecene 15-O-acetyltransferase TRI3, found in Fusarium sporotrichioides.